The sequence spans 48 residues: Large ribosomal subunit protein bL34 (48 aa).

It belongs to the bacterial ribosomal protein bL34 family.

This Gloeothece citriformis (strain PCC 7424) (Cyanothece sp. (strain PCC 7424)) protein is Large ribosomal subunit protein bL34.